Here is a 319-residue protein sequence, read N- to C-terminus: MAGPLGKDLLGLAPLSAEQIRLVLDTAIPFREISERAIKKVPTLRGATIVNLFFEASTRTRISFEFAEKRLSADTVNVAVAGSSVSKGETLVDTARNLEAMKIDMVVIRHPASGAARFLAERIESNVINAGDGTNEHPTQGLLDMLTLRDRLGDLAGKRICIVGDVLHSRVARSNIWGLKKLGAEVAVCGPRSLLPNAIGEMGVTVFDRVEAAIEWADALNILRLQLERMQAGYIPSLREYNRVFGVTSARLEHASRDLLILHPGPMNRGVEIDSDVADGPHSVILDQVTNGVAVRMAVLYLLAGGKPELADAAQKGVA.

Carbamoyl phosphate contacts are provided by Arg59 and Thr60. Lys87 contacts L-aspartate. Arg109, His137, and Gln140 together coordinate carbamoyl phosphate. Residues Arg170 and Arg224 each coordinate L-aspartate. Carbamoyl phosphate-binding residues include Gly265 and Pro266.

It belongs to the aspartate/ornithine carbamoyltransferase superfamily. ATCase family. In terms of assembly, heterododecamer (2C3:3R2) of six catalytic PyrB chains organized as two trimers (C3), and six regulatory PyrI chains organized as three dimers (R2).

It carries out the reaction carbamoyl phosphate + L-aspartate = N-carbamoyl-L-aspartate + phosphate + H(+). Its pathway is pyrimidine metabolism; UMP biosynthesis via de novo pathway; (S)-dihydroorotate from bicarbonate: step 2/3. Its function is as follows. Catalyzes the condensation of carbamoyl phosphate and aspartate to form carbamoyl aspartate and inorganic phosphate, the committed step in the de novo pyrimidine nucleotide biosynthesis pathway. This chain is Aspartate carbamoyltransferase catalytic subunit, found in Gemmatimonas aurantiaca (strain DSM 14586 / JCM 11422 / NBRC 100505 / T-27).